Here is a 1204-residue protein sequence, read N- to C-terminus: Major DNA-binding protein (1204 aa).

The tract at residues serine 289 to phenylalanine 314 is disordered. A zinc finger lies at cysteine 497–histidine 510. 2 short sequence motifs (required for filament formation) span residues phenylalanine 841–tryptophan 842 and phenylalanine 1146–phenylalanine 1148. Residues leucine 1177–isoleucine 1204 form a required for nuclear localization region.

The protein belongs to the herpesviridae major DNA-binding protein family. Homooligomers. Forms double-helical filaments necessary for the formation of replication compartments within the host nucleus. Interacts with the origin-binding protein. Interacts with the helicase primase complex; this interaction stimulates primer synthesis activity of the helicase-primase complex. Interacts with the DNA polymerase. Interacts with the alkaline exonuclease; this interaction increases its nuclease processivity.

The protein localises to the host nucleus. Its function is as follows. Plays several crucial roles in viral infection. Participates in the opening of the viral DNA origin to initiate replication by interacting with the origin-binding protein. May disrupt loops, hairpins and other secondary structures present on ssDNA to reduce and eliminate pausing of viral DNA polymerase at specific sites during elongation. Promotes viral DNA recombination by performing strand-transfer, characterized by the ability to transfer a DNA strand from a linear duplex to a complementary single-stranded DNA circle. Can also catalyze the renaturation of complementary single strands. Additionally, reorganizes the host cell nucleus, leading to the formation of prereplicative sites and replication compartments. This process is driven by the protein which can form double-helical filaments in the absence of DNA. This chain is Major DNA-binding protein, found in Homo sapiens (Human).